Consider the following 299-residue polypeptide: Delta-9 desaturase-like 1 protein (299 aa).

2 helical membrane passes run 31-51 (IDIA…LAPF) and 55-75 (WEAL…ITFS). The Histidine box-1 motif lies at 77 to 82 (HRNLTH). Positions 114–118 (HRFHH) match the Histidine box-2 motif. Transmembrane regions (helical) follow at residues 174–194 (IGLH…LPYL) and 198–218 (VGVG…ACHI). Positions 246 to 250 (HNNHH) match the Histidine box-3 motif. Residues 262-282 (WYQVDLTWYLICFFQALGLAT) form a helical membrane-spanning segment.

This sequence belongs to the fatty acid desaturase type 1 family. Requires Fe cation as cofactor.

It is found in the endoplasmic reticulum membrane. Its pathway is lipid metabolism; polyunsaturated fatty acid biosynthesis. The sequence is that of Delta-9 desaturase-like 1 protein from Arabidopsis thaliana (Mouse-ear cress).